The chain runs to 502 residues: Lysine--tRNA ligase (502 aa).

2 residues coordinate Mg(2+): Glu-411 and Glu-418.

This sequence belongs to the class-II aminoacyl-tRNA synthetase family. Homodimer. Mg(2+) serves as cofactor.

Its subcellular location is the cytoplasm. The enzyme catalyses tRNA(Lys) + L-lysine + ATP = L-lysyl-tRNA(Lys) + AMP + diphosphate. This is Lysine--tRNA ligase from Chromohalobacter salexigens (strain ATCC BAA-138 / DSM 3043 / CIP 106854 / NCIMB 13768 / 1H11).